A 2592-amino-acid polypeptide reads, in one-letter code: 6-hydroxymellein synthase cdmE (2592 aa).

The span at 1–11 shows a compositional bias: basic and acidic residues; the sequence is MVLHPSDRRFP. The interval 1–25 is disordered; sequence MVLHPSDRRFPETNGVGGHSKDSSA. The 425-residue stretch at 32-456 folds into the Ketosynthase family 3 (KS3) domain; that stretch reads LEPLAIVGFA…GTNAHVVLES (425 aa). Catalysis depends on for beta-ketoacyl synthase activity residues cysteine 205, histidine 340, and histidine 379. A malonyl-CoA:ACP transacylase (MAT) domain region spans residues 589–910; the sequence is VFTGQGAQWP…RYSHTITRKK (322 aa). Positions 978 to 1113 are N-terminal hotdog fold; that stretch reads HELLGSPDPD…GFIESKCESD (136 aa). The dehydratase (DH) domain stretch occupies residues 978–1291; sequence HELLGSPDPD…IRGTELCLLS (314 aa). Residues 978–1296 form the PKS/mFAS DH domain; it reads HELLGSPDPD…LCLLSAGRGD (319 aa). A C-terminal hotdog fold region spans residues 1140 to 1296; that stretch reads TQIGSISAFY…LCLLSAGRGD (157 aa). S-adenosyl-L-methionine is bound by residues isoleucine 1462 and glutamate 1484. The tract at residues 1483–1591 is methyltransferase (CMeT) domain; it reads LEIGTGFGSV…HSLLKPGGKL (109 aa). Residues 1887–2199 form an enoyl reductase (ER) domain region; sequence GLLVWSDDEA…NDSNMDTAVI (313 aa). A ketoreductase (KR) domain region spans residues 2223–2398; the sequence is ATYVIAGGLG…IPGMSVNLGN (176 aa). Residues 2509 to 2586 enclose the Carrier domain; sequence VAASHVTEAI…GLSEKIARQS (78 aa). Position 2546 is an O-(pantetheine 4'-phosphoryl)serine (serine 2546).

It carries out the reaction 5 malonyl-CoA + AH2 + 5 H(+) = 6-hydroxymellein + A + 5 CO2 + 5 CoA + H2O. The protein operates within secondary metabolite biosynthesis; terpenoid biosynthesis. Its function is as follows. Highly reducing polyketide synthase; part of the gene cluster that mediates the biosynthesis of chrodrimanin B, a meroterpenoid that acts as a potent blocker of insect GABA-gated chloride channels. The first step of the pathway is the biosynthesis of 6-hydroxymellein by the polyketide synthase cdmE. The prenyltransferase cdmH acts as a 6-hydroxymellein 5-farnesyltransferase and produces the hydrophobic metabolite verruculide C. The FAD-dependent monooxygenase cdmI further converts verruculide C into verruculide B. The terpene cyclase cdmG then produced the pentacyclic molecule 3-hydroxypentacecilide A, the backbone structure of chrodrimanin B, via folding the farnesyl moiety of the substrate into the chair-boat conformation. The short-chain dehydrogenase/reductase cdmF functions as the 3-OH dehydrogenase that oxidizes the C-3 hydroxyl group of 3-hydroxypentacecilide A and produces chrodrimanin C, the dehydrogenated product of 3-hydroxypentacecilide A. The cytochrome P450 monooxygenase cdmJ then accepts both 3-hydroxypentacecilide A and chrodrimanin C and functions as a C-7-beta-hydroxylase to produce respectively chrodrimanin H and chrodrimanin F. The dioxygenase cdmA accepts chrodrimanin H to afford chrodrimanin E, which is further transformed to chrodrimanin A by the dioxygenase cdmD. CdmA can also accept chrodrimanin C as substrate to convert it into verruculide A, which is further converted into chrodrimanin T by cdmD. The last step of the biosynthesis is proposed to be performed by the acetyltransferase cdmC which acetylates chrodrimanin A to yield chrodrimanin B. The pathway may also lead to the production of additional shunt products, including chrodrimanins T and U. In Talaromyces verruculosus (Penicillium verruculosum), this protein is 6-hydroxymellein synthase cdmE.